Reading from the N-terminus, the 221-residue chain is ATP phosphoribosyltransferase (221 aa).

This sequence belongs to the ATP phosphoribosyltransferase family. Short subfamily. In terms of assembly, heteromultimer composed of HisG and HisZ subunits.

The protein resides in the cytoplasm. It catalyses the reaction 1-(5-phospho-beta-D-ribosyl)-ATP + diphosphate = 5-phospho-alpha-D-ribose 1-diphosphate + ATP. It participates in amino-acid biosynthesis; L-histidine biosynthesis; L-histidine from 5-phospho-alpha-D-ribose 1-diphosphate: step 1/9. Catalyzes the condensation of ATP and 5-phosphoribose 1-diphosphate to form N'-(5'-phosphoribosyl)-ATP (PR-ATP). Has a crucial role in the pathway because the rate of histidine biosynthesis seems to be controlled primarily by regulation of HisG enzymatic activity. In Anaeromyxobacter dehalogenans (strain 2CP-1 / ATCC BAA-258), this protein is ATP phosphoribosyltransferase.